We begin with the raw amino-acid sequence, 93 residues long: GWPAYPGSNGIRSSVCQKKLGCGSKNLASLGVCKAFCLGRKRFWQKCGKNGSSGKGSRISNPVLAHAVEKASKGLIKVTDMAVAAIVKYAGKK.

Cystine bridges form between C16–C37 and C22–C33.

Belongs to the worm cytolysin family. In terms of tissue distribution, localized within the skin and proboscis and are most readily isolated from body mucus secretions.

The protein resides in the secreted. Its function is as follows. Cytolysin that shows hemolytic activity (on bovine erythrocytes, HC(50)=5.75 mg/ml). This hemolytic activity is completely inhibited by small unilamelar vesicles composed of PC/PG, PC/PI and PC/PS in 1:1 molar ratios (with at least 100 mg/ml concentration). The sequence is that of Parbolysin P2 from Parborlasia corrugatus (Antarctic nemertean worm).